A 388-amino-acid chain; its full sequence is Alanine racemase (388 aa).

The active-site Proton acceptor; specific for D-alanine is Lys39. An N6-(pyridoxal phosphate)lysine modification is found at Lys39. An N6-carboxylysine modification is found at Lys129. Residue Arg136 coordinates substrate. Tyr265 (proton acceptor; specific for L-alanine) is an active-site residue. Met312 contacts substrate.

Belongs to the alanine racemase family. As to quaternary structure, homodimer. It depends on pyridoxal 5'-phosphate as a cofactor.

It carries out the reaction L-alanine = D-alanine. Its pathway is amino-acid biosynthesis; D-alanine biosynthesis; D-alanine from L-alanine: step 1/1. Its activity is regulated as follows. Inhibited by acetate and propionate. Irreversibly inhibited by cycloserine. In terms of biological role, catalyzes the interconversion of L-alanine and D-alanine. Also weakly active on serine. The sequence is that of Alanine racemase (alr) from Geobacillus stearothermophilus (Bacillus stearothermophilus).